The chain runs to 125 residues: C-X-C motif chemokine 9 (125 aa).

The first 21 residues, 1–21 (MKKSAPLFLGIIFLTLTGVQG), serve as a signal peptide directing secretion. 2 disulfides stabilise this stretch: cysteine 30–cysteine 57 and cysteine 32–cysteine 73. Residues 91 to 125 (QVNQKKKQRKGKKYKKTKKVPKVKRSQRPSQKKTT) are disordered. Residues 93–125 (NQKKKQRKGKKYKKTKKVPKVKRSQRPSQKKTT) show a composition bias toward basic residues.

This sequence belongs to the intercrine alpha (chemokine CxC) family.

It is found in the secreted. Cytokine that affects the growth, movement, or activation state of cells that participate in immune and inflammatory response. Chemotactic for activated T-cells. Binds to CXCR3. In Bos taurus (Bovine), this protein is C-X-C motif chemokine 9 (CXCL9).